The chain runs to 481 residues: Cytochrome P450 monooygenase 2 (481 aa).

Residues 12-32 (GSQLLPFYIAIFVFTLVPWAI) form a helical membrane-spanning segment. Cys418 is a heme binding site.

This sequence belongs to the cytochrome P450 family. It depends on heme as a cofactor.

It localises to the membrane. It functions in the pathway plant hormone biosynthesis; gibberellin biosynthesis. Functionally, gibberellin 20-oxidase; part of the gene cluster that mediates the biosynthesis of gibberellins (GAs), diterpenoids that may provide a selective advantage during infection of the preferred host plant, rice. Gibberellins (GAs) are diterpenoids and are synthesized via the mevalonate pathway. Biosynthesis of the major metabolite GA3 (gibberellic acid) from geranylgeranyl diphosphate (GGPP) requires 13 steps. The GGPP produced by the geranylgeranyl diphosphate synthase GGS2 is converted to ent-kaurene via ent-copalyldiphosphate in a two-step cyclization reaction performed by the bifunctional ent-copalyl diphosphate synthase/ent-kaurene synthase enzyme (CPS/KS). Ent-Kaurene is metabolized to GAs by a series of oxidation reactions catalyzed by cytochrome P450 monooxygenases. Cytochrome P450 monooxygenase P450-4 is an ent-kaurene oxidase that catalyzes the three oxidation steps between ent-kaurene and ent-kaurenoic acid. The highly multifunctional cytochrome P450 monooxygenase P450-1 then catalyzes four steps involving oxidation at two carbon atoms, in the main pathway from ent-kaurenoic acid to GA14 via GA12-aldehyde as well as producing kaurenolides and fujenoic acids as by-products. The cytochrome P450 monooxygenase P450-2 then converts GA14 to GA4 by removal of C-20. GA4 is further converted to GA7 by the GA4 desaturase DES via 1,2-desaturation before cytochrome P450 monooxygenase P450-3, a 13-hydroxylase, hydroxylates GA7 to GA3, the final product of the GA-biosynthetic pathway. This chain is Cytochrome P450 monooygenase 2, found in Gibberella fujikuroi (strain CBS 195.34 / IMI 58289 / NRRL A-6831) (Bakanae and foot rot disease fungus).